A 652-amino-acid chain; its full sequence is Fimbrin-4 (652 aa).

4 consecutive Calponin-homology (CH) domains span residues 116 to 233 (ESEK…KIQL), 261 to 364 (LAPE…HHRN), 388 to 494 (SREE…RYTM), and 509 to 617 (DITE…NWSL). Actin-binding stretches follow at residues 116–364 (ESEK…HHRN) and 388–617 (SREE…NWSL). The tract at residues 623–652 (TESTVSDDTDVSSVTEEISNLSTDDGSSDV) is disordered. The span at 640-652 (ISNLSTDDGSSDV) shows a compositional bias: polar residues.

As to quaternary structure, interacts with F-actin.

The protein resides in the cytoplasm. The protein localises to the cytoskeleton. Cross-links actin filaments (F-actin). Stabilizes and prevents F-actin depolymerization mediated by profilin. May regulate actin cytoarchitecture, cell cycle, cell division, cell elongation and cytoplasmic tractus. This chain is Fimbrin-4, found in Arabidopsis thaliana (Mouse-ear cress).